Here is a 260-residue protein sequence, read N- to C-terminus: NH(3)-dependent NAD(+) synthetase (260 aa).

Residue 31-38 (GLSGGLDS) participates in ATP binding. D37 is a Mg(2+) binding site. A deamido-NAD(+)-binding site is contributed by R112. Residue T132 participates in ATP binding. E137 contributes to the Mg(2+) binding site. The ATP site is built by K161 and S183.

This sequence belongs to the NAD synthetase family. In terms of assembly, homodimer.

It carries out the reaction deamido-NAD(+) + NH4(+) + ATP = AMP + diphosphate + NAD(+) + H(+). Its pathway is cofactor biosynthesis; NAD(+) biosynthesis; NAD(+) from deamido-NAD(+) (ammonia route): step 1/1. Functionally, catalyzes the ATP-dependent amidation of deamido-NAD to form NAD. Uses ammonia as a nitrogen source. In Helicobacter pylori (strain HPAG1), this protein is NH(3)-dependent NAD(+) synthetase.